The primary structure comprises 133 residues: ATP synthase epsilon chain (133 aa).

The protein belongs to the ATPase epsilon chain family. F-type ATPases have 2 components, CF(1) - the catalytic core - and CF(0) - the membrane proton channel. CF(1) has five subunits: alpha(3), beta(3), gamma(1), delta(1), epsilon(1). CF(0) has three main subunits: a, b and c.

The protein resides in the cell membrane. Its function is as follows. Produces ATP from ADP in the presence of a proton gradient across the membrane. This is ATP synthase epsilon chain from Halalkalibacterium halodurans (strain ATCC BAA-125 / DSM 18197 / FERM 7344 / JCM 9153 / C-125) (Bacillus halodurans).